The following is a 382-amino-acid chain: Glutamyl-tRNA reductase (382 aa).

Substrate is bound by residues 38 to 41 (TCNR), Ser85, 90 to 92 (ENQ), and Gln96. The active-site Nucleophile is the Cys39. 164–169 (GAGEMG) is an NADP(+) binding site.

The protein belongs to the glutamyl-tRNA reductase family. As to quaternary structure, homodimer.

The catalysed reaction is (S)-4-amino-5-oxopentanoate + tRNA(Glu) + NADP(+) = L-glutamyl-tRNA(Glu) + NADPH + H(+). The protein operates within porphyrin-containing compound metabolism; protoporphyrin-IX biosynthesis; 5-aminolevulinate from L-glutamyl-tRNA(Glu): step 1/2. Catalyzes the NADPH-dependent reduction of glutamyl-tRNA(Glu) to glutamate 1-semialdehyde (GSA). The sequence is that of Glutamyl-tRNA reductase from Methanococcus maripaludis (strain C6 / ATCC BAA-1332).